A 138-amino-acid chain; its full sequence is ATP synthase epsilon chain (138 aa).

This sequence belongs to the ATPase epsilon chain family. In terms of assembly, F-type ATPases have 2 components, CF(1) - the catalytic core - and CF(0) - the membrane proton channel. CF(1) has five subunits: alpha(3), beta(3), gamma(1), delta(1), epsilon(1). CF(0) has three main subunits: a, b and c.

The protein localises to the cell inner membrane. Its function is as follows. Produces ATP from ADP in the presence of a proton gradient across the membrane. This Blochmanniella floridana protein is ATP synthase epsilon chain.